Here is a 261-residue protein sequence, read N- to C-terminus: Cytochrome c oxidase subunit 3 (261 aa).

Topologically, residues 1-15 (MTHQTHAYHMVNPSP) are mitochondrial matrix. The helical transmembrane segment at 16 to 34 (WPLTGALSALLMTSGLIMW) threads the bilayer. Residues 35 to 40 (FHFNSM) lie on the Mitochondrial intermembrane side of the membrane. The chain crosses the membrane as a helical span at residues 41 to 66 (YLLMLGLTTNTLTMYQWWRDIVREST). The Mitochondrial matrix portion of the chain corresponds to 67 to 72 (FQGHHT). Residues 73–105 (PIVQKGLRYGMILFIVSEVFFFAGFFWAFYHSS) traverse the membrane as a helical segment. Residues 106–128 (LAPTPELGGCWPPTGITPLNPME) lie on the Mitochondrial intermembrane side of the membrane. Residues 129–152 (VPLLNTSVLLASGVSITWAHHSLM) form a helical membrane-spanning segment. Residues 153–155 (EGN) lie on the Mitochondrial matrix side of the membrane. The helical transmembrane segment at 156-183 (RKHMLQALFITISLGVYFTLLQASEYYE) threads the bilayer. Topologically, residues 184–190 (TPFTISD) are mitochondrial intermembrane. Residues 191 to 223 (GIYGSTFFMATGFHGLHVIIGSTFLIVCFMRQL) form a helical membrane-spanning segment. Topologically, residues 224–232 (KFHFTSNHH) are mitochondrial matrix. A helical transmembrane segment spans residues 233–256 (FGFEAAAWYWHFVDVVWLFLYVSI). Topologically, residues 257–261 (YWWGS) are mitochondrial intermembrane.

Belongs to the cytochrome c oxidase subunit 3 family. In terms of assembly, component of the cytochrome c oxidase (complex IV, CIV), a multisubunit enzyme composed of 14 subunits. The complex is composed of a catalytic core of 3 subunits MT-CO1, MT-CO2 and MT-CO3, encoded in the mitochondrial DNA, and 11 supernumerary subunits COX4I, COX5A, COX5B, COX6A, COX6B, COX6C, COX7A, COX7B, COX7C, COX8 and NDUFA4, which are encoded in the nuclear genome. The complex exists as a monomer or a dimer and forms supercomplexes (SCs) in the inner mitochondrial membrane with NADH-ubiquinone oxidoreductase (complex I, CI) and ubiquinol-cytochrome c oxidoreductase (cytochrome b-c1 complex, complex III, CIII), resulting in different assemblies (supercomplex SCI(1)III(2)IV(1) and megacomplex MCI(2)III(2)IV(2)).

Its subcellular location is the mitochondrion inner membrane. It carries out the reaction 4 Fe(II)-[cytochrome c] + O2 + 8 H(+)(in) = 4 Fe(III)-[cytochrome c] + 2 H2O + 4 H(+)(out). Its function is as follows. Component of the cytochrome c oxidase, the last enzyme in the mitochondrial electron transport chain which drives oxidative phosphorylation. The respiratory chain contains 3 multisubunit complexes succinate dehydrogenase (complex II, CII), ubiquinol-cytochrome c oxidoreductase (cytochrome b-c1 complex, complex III, CIII) and cytochrome c oxidase (complex IV, CIV), that cooperate to transfer electrons derived from NADH and succinate to molecular oxygen, creating an electrochemical gradient over the inner membrane that drives transmembrane transport and the ATP synthase. Cytochrome c oxidase is the component of the respiratory chain that catalyzes the reduction of oxygen to water. Electrons originating from reduced cytochrome c in the intermembrane space (IMS) are transferred via the dinuclear copper A center (CU(A)) of subunit 2 and heme A of subunit 1 to the active site in subunit 1, a binuclear center (BNC) formed by heme A3 and copper B (CU(B)). The BNC reduces molecular oxygen to 2 water molecules using 4 electrons from cytochrome c in the IMS and 4 protons from the mitochondrial matrix. This Halichoerus grypus (Gray seal) protein is Cytochrome c oxidase subunit 3 (MT-CO3).